The primary structure comprises 312 residues: Ribosomal RNA small subunit methyltransferase H (312 aa).

S-adenosyl-L-methionine is bound by residues G34 to H36, D54, L83, D99, and Q106.

This sequence belongs to the methyltransferase superfamily. RsmH family.

It localises to the cytoplasm. The enzyme catalyses cytidine(1402) in 16S rRNA + S-adenosyl-L-methionine = N(4)-methylcytidine(1402) in 16S rRNA + S-adenosyl-L-homocysteine + H(+). Functionally, specifically methylates the N4 position of cytidine in position 1402 (C1402) of 16S rRNA. The polypeptide is Ribosomal RNA small subunit methyltransferase H (Rubrobacter xylanophilus (strain DSM 9941 / JCM 11954 / NBRC 16129 / PRD-1)).